Reading from the N-terminus, the 549-residue chain is YTH domain-containing family protein 1 (549 aa).

5 disordered regions span residues 29–102 (QAPW…QPNM), 139–165 (GHPPHQAPVDSQSNVVRGPPRKPRQSG), 243–262 (GASGITAPTGPSATTPQQAV), 273–298 (DSTETQSDNADTDTPTAVGTPDAKGP), and 425–458 (REDSSEGVTQEEPAPAVAEQDDTTGGLDGNSENK). Residues 49-61 (VVGQTQSSPQYNG) show a composition bias toward polar residues. The segment covering 71–102 (QGYYMPQQQQQQQQMPQYYGGPMSPSQPQPNM) has biased composition (low complexity). Polar residues-rich tracts occupy residues 251-260 (TGPSATTPQQ) and 273-289 (DSTETQSDNADTDTPTA). The YTH domain maps to 307–513 (DRFFVLKSLT…SVGRRLIGLF (207 aa)).

Belongs to the YTHDF family. YTHDF1 subfamily.

Specifically recognizes and binds N6-methyladenosine (m6A)-containing mRNAs, and regulates their stability. M6A is a modification present at internal sites of mRNAs and some non-coding RNAs and plays a role in mRNA stability and processing. Directly interacts with the acid phosphatase APHA mRNA to increase its stability. This Cryphonectria parasitica (strain ATCC 38755 / EP155) protein is YTH domain-containing family protein 1.